The sequence spans 224 residues: Uracil phosphoribosyltransferase (224 aa).

Arginine 92 contributes to the 5-phospho-alpha-D-ribose 1-diphosphate binding site. Position 109 (lysine 109) interacts with GTP. Residues arginine 117 and 145–153 (DPMLATGGT) contribute to the 5-phospho-alpha-D-ribose 1-diphosphate site. Residues isoleucine 210 and 215–217 (GDA) each bind uracil. A 5-phospho-alpha-D-ribose 1-diphosphate-binding site is contributed by aspartate 216.

The protein belongs to the UPRTase family. Requires Mg(2+) as cofactor.

It carries out the reaction UMP + diphosphate = 5-phospho-alpha-D-ribose 1-diphosphate + uracil. It participates in pyrimidine metabolism; UMP biosynthesis via salvage pathway; UMP from uracil: step 1/1. Its activity is regulated as follows. Allosterically activated by GTP. Functionally, catalyzes the conversion of uracil and 5-phospho-alpha-D-ribose 1-diphosphate (PRPP) to UMP and diphosphate. In Nicotiana tabacum (Common tobacco), this protein is Uracil phosphoribosyltransferase (UPP).